A 154-amino-acid chain; its full sequence is 6,7-dimethyl-8-ribityllumazine synthase (154 aa).

Residues F21, 55–57 (AFE), and 79–81 (CVI) each bind 5-amino-6-(D-ribitylamino)uracil. Residue 84–85 (AT) coordinates (2S)-2-hydroxy-3-oxobutyl phosphate. The Proton donor role is filled by H87. F112 is a 5-amino-6-(D-ribitylamino)uracil binding site. Residue R126 participates in (2S)-2-hydroxy-3-oxobutyl phosphate binding.

This sequence belongs to the DMRL synthase family. Forms an icosahedral capsid composed of 60 subunits, arranged as a dodecamer of pentamers.

The catalysed reaction is (2S)-2-hydroxy-3-oxobutyl phosphate + 5-amino-6-(D-ribitylamino)uracil = 6,7-dimethyl-8-(1-D-ribityl)lumazine + phosphate + 2 H2O + H(+). The protein operates within cofactor biosynthesis; riboflavin biosynthesis; riboflavin from 2-hydroxy-3-oxobutyl phosphate and 5-amino-6-(D-ribitylamino)uracil: step 1/2. Functionally, catalyzes the formation of 6,7-dimethyl-8-ribityllumazine by condensation of 5-amino-6-(D-ribitylamino)uracil with 3,4-dihydroxy-2-butanone 4-phosphate. This is the penultimate step in the biosynthesis of riboflavin. In Staphylococcus aureus (strain Mu50 / ATCC 700699), this protein is 6,7-dimethyl-8-ribityllumazine synthase.